The primary structure comprises 131 residues: Large ribosomal subunit protein bL12c (131 aa).

The tract at residues 107 to 131 (QGVSKDDAEASKKQLEDAGAKVKIS) is disordered. Over residues 110 to 131 (SKDDAEASKKQLEDAGAKVKIS) the composition is skewed to basic and acidic residues.

The protein belongs to the bacterial ribosomal protein bL12 family. As to quaternary structure, homodimer. Part of the ribosomal stalk of the 50S ribosomal subunit. Forms a multimeric L10(L12)X complex, where L10 forms an elongated spine to which 2 to 4 L12 dimers bind in a sequential fashion. Binds GTP-bound translation factors.

It is found in the plastid. Its subcellular location is the chloroplast. Functionally, forms part of the ribosomal stalk which helps the ribosome interact with GTP-bound translation factors. Is thus essential for accurate translation. In Chlorella vulgaris (Green alga), this protein is Large ribosomal subunit protein bL12c.